The primary structure comprises 113 residues: T cell receptor alpha variable 13-2 (113 aa).

The N-terminal stretch at 1–21 is a signal peptide; sequence MAGIRALFMYLWLQLDWVSRG. The Ig-like domain occupies 22 to 113; that stretch reads ESVGLHLPTL…DSAVYFCAEN (92 aa). A disulfide bridge connects residues Cys-43 and Cys-110. Asn-87 carries an N-linked (GlcNAc...) asparagine glycan.

Alpha-beta TR is a heterodimer composed of an alpha and beta chain; disulfide-linked. The alpha-beta TR is associated with the transmembrane signaling CD3 coreceptor proteins to form the TR-CD3 (TcR or TCR). The assembly of alpha-beta TR heterodimers with CD3 occurs in the endoplasmic reticulum where a single alpha-beta TR heterodimer associates with one CD3D-CD3E heterodimer, one CD3G-CD3E heterodimer and one CD247 homodimer forming a stable octameric structure. CD3D-CD3E and CD3G-CD3E heterodimers preferentially associate with TR alpha and TR beta chains, respectively. The association of the CD247 homodimer is the last step of TcR assembly in the endoplasmic reticulum and is required for transport to the cell surface.

The protein resides in the cell membrane. Functionally, v region of the variable domain of T cell receptor (TR) alpha chain that participates in the antigen recognition. Alpha-beta T cell receptors are antigen specific receptors which are essential to the immune response and are present on the cell surface of T lymphocytes. Recognize peptide-major histocompatibility (MH) (pMH) complexes that are displayed by antigen presenting cells (APC), a prerequisite for efficient T cell adaptive immunity against pathogens. Binding of alpha-beta TR to pMH complex initiates TR-CD3 clustering on the cell surface and intracellular activation of LCK that phosphorylates the ITAM motifs of CD3G, CD3D, CD3E and CD247 enabling the recruitment of ZAP70. In turn ZAP70 phosphorylates LAT, which recruits numerous signaling molecules to form the LAT signalosome. The LAT signalosome propagates signal branching to three major signaling pathways, the calcium, the mitogen-activated protein kinase (MAPK) kinase and the nuclear factor NF-kappa-B (NF-kB) pathways, leading to the mobilization of transcription factors that are critical for gene expression and essential for T cell growth and differentiation. The T cell repertoire is generated in the thymus, by V-(D)-J rearrangement. This repertoire is then shaped by intrathymic selection events to generate a peripheral T cell pool of self-MH restricted, non-autoaggressive T cells. Post-thymic interaction of alpha-beta TR with the pMH complexes shapes TR structural and functional avidity. In Homo sapiens (Human), this protein is T cell receptor alpha variable 13-2.